A 254-amino-acid chain; its full sequence is Geranylgeranylglyceryl phosphate synthase (254 aa).

The Mg(2+) site is built by Asp28 and Ser57. Residues 176–182 (YLEAGSG), 207–208 (GG), and 229–230 (GT) each bind sn-glycerol 1-phosphate.

Belongs to the GGGP/HepGP synthase family. Group II subfamily. The cofactor is Mg(2+).

It localises to the cytoplasm. The enzyme catalyses sn-glycerol 1-phosphate + (2E,6E,10E)-geranylgeranyl diphosphate = sn-3-O-(geranylgeranyl)glycerol 1-phosphate + diphosphate. It participates in membrane lipid metabolism; glycerophospholipid metabolism. Functionally, prenyltransferase that catalyzes the transfer of the geranylgeranyl moiety of geranylgeranyl diphosphate (GGPP) to the C3 hydroxyl of sn-glycerol-1-phosphate (G1P). This reaction is the first ether-bond-formation step in the biosynthesis of archaeal membrane lipids. The protein is Geranylgeranylglyceryl phosphate synthase of Pyrococcus horikoshii (strain ATCC 700860 / DSM 12428 / JCM 9974 / NBRC 100139 / OT-3).